The sequence spans 417 residues: Glutamyl-tRNA reductase (417 aa).

Substrate-binding positions include 49–52, S109, 114–116, and Q120; these read TCNR and ESQ. C50 (nucleophile) is an active-site residue. 189–194 contributes to the NADP(+) binding site; it reads GLGEIG.

It belongs to the glutamyl-tRNA reductase family. Homodimer.

The enzyme catalyses (S)-4-amino-5-oxopentanoate + tRNA(Glu) + NADP(+) = L-glutamyl-tRNA(Glu) + NADPH + H(+). The protein operates within porphyrin-containing compound metabolism; protoporphyrin-IX biosynthesis; 5-aminolevulinate from L-glutamyl-tRNA(Glu): step 1/2. Functionally, catalyzes the NADPH-dependent reduction of glutamyl-tRNA(Glu) to glutamate 1-semialdehyde (GSA). This chain is Glutamyl-tRNA reductase, found in Streptococcus sanguinis (strain SK36).